Reading from the N-terminus, the 760-residue chain is Leucine-rich repeat extensin-like protein 3 (760 aa).

The first 20 residues, 1 to 20, serve as a signal peptide directing secretion; the sequence is MKKTIQILLFFFFLINLTNA. The N-linked (GlcNAc...) asparagine glycan is linked to Asn-16. The LRR 1 repeat unit spans residues 21 to 45; that stretch reads LSISSDGGVLSDNEVRHIQRRQLLE. Residues Asn-86 and Asn-98 are each glycosylated (N-linked (GlcNAc...) asparagine). 9 LRR repeats span residues 113-137, 138-160, 161-185, 186-209, 211-232, 234-255, 256-279, 281-303, and 304-327; these read IRTV…LGLL, SDLA…RFNR, LKLL…VLQL, PSLK…LFSK, LDAI…FGDS, VSVI…LVEM, KNLN…IGRL, NVTV…VGEM, and VSVE…ICQL. Residue Asn-281 is glycosylated (N-linked (GlcNAc...) asparagine). N-linked (GlcNAc...) asparagine glycosylation occurs at Asn-332. Disordered regions lie at residues 389-502, 515-610, and 663-748; these read GRSV…PPPP, PPVY…YSPP, and PPPP…PVIG. 2 stretches are compositionally biased toward pro residues: residues 394-415 and 423-502; these read PRPP…PPAP and LTSP…PPPP. A contains the Ser-Pro(4) repeats region spans residues 409–758; it reads SPPPPAPIFS…VSYASPPPPP (350 aa). The segment covering 663 to 745 has biased composition (pro residues); the sequence is PPPPVHYSSP…SPEYEGPLPP (83 aa).

In terms of assembly, interacts with SH3P1. In terms of processing, hydroxylated on proline residues in the S-P-P-P-P repeat. Post-translationally, O-glycosylated on hydroxyprolines. In terms of tissue distribution, expressed in roots, stems, leaves and flowers, mostly in vascular tissues.

The protein localises to the secreted. Its subcellular location is the cell wall. Modulates cell morphogenesis by regulating cell wall formation and assembly, and/or growth polarization. This is Leucine-rich repeat extensin-like protein 3 (LRX3) from Arabidopsis thaliana (Mouse-ear cress).